The chain runs to 275 residues: ATP synthase subunit delta (275 aa).

The protein belongs to the ATPase delta chain family. In terms of assembly, F-type ATPases have 2 components, F(1) - the catalytic core - and F(0) - the membrane proton channel. F(1) has five subunits: alpha(3), beta(3), gamma(1), delta(1), epsilon(1). F(0) has three main subunits: a(1), b(2) and c(10-14). The alpha and beta chains form an alternating ring which encloses part of the gamma chain. F(1) is attached to F(0) by a central stalk formed by the gamma and epsilon chains, while a peripheral stalk is formed by the delta and b chains.

Its subcellular location is the cell membrane. Functionally, f(1)F(0) ATP synthase produces ATP from ADP in the presence of a proton or sodium gradient. F-type ATPases consist of two structural domains, F(1) containing the extramembraneous catalytic core and F(0) containing the membrane proton channel, linked together by a central stalk and a peripheral stalk. During catalysis, ATP synthesis in the catalytic domain of F(1) is coupled via a rotary mechanism of the central stalk subunits to proton translocation. In terms of biological role, this protein is part of the stalk that links CF(0) to CF(1). It either transmits conformational changes from CF(0) to CF(1) or is implicated in proton conduction. This is ATP synthase subunit delta from Pseudarthrobacter chlorophenolicus (strain ATCC 700700 / DSM 12829 / CIP 107037 / JCM 12360 / KCTC 9906 / NCIMB 13794 / A6) (Arthrobacter chlorophenolicus).